The sequence spans 521 residues: Lysine--tRNA ligase (521 aa).

Positions 32–40 match the 'HIGH' region motif; it reads PSGTVHIGN. Positions 280 to 284 match the 'KMSKS' region motif; it reads KISSS.

The protein belongs to the class-I aminoacyl-tRNA synthetase family.

The protein resides in the cytoplasm. The catalysed reaction is tRNA(Lys) + L-lysine + ATP = L-lysyl-tRNA(Lys) + AMP + diphosphate. This Borreliella burgdorferi (strain ATCC 35210 / DSM 4680 / CIP 102532 / B31) (Borrelia burgdorferi) protein is Lysine--tRNA ligase (lysS).